Reading from the N-terminus, the 343-residue chain is Probable dual-specificity RNA methyltransferase RlmN (343 aa).

Catalysis depends on Glu-91, which acts as the Proton acceptor. The Radical SAM core domain maps to 97–327 (YKHGNSICVS…TTIRREMGSD (231 aa)). Cys-104 and Cys-332 form a disulfide bridge. [4Fe-4S] cluster contacts are provided by Cys-111, Cys-115, and Cys-118. S-adenosyl-L-methionine-binding positions include 158–159 (GE), Ser-190, 213–215 (SLH), and Asn-289. Cys-332 functions as the S-methylcysteine intermediate in the catalytic mechanism.

The protein belongs to the radical SAM superfamily. RlmN family. The cofactor is [4Fe-4S] cluster.

It is found in the cytoplasm. The enzyme catalyses adenosine(2503) in 23S rRNA + 2 reduced [2Fe-2S]-[ferredoxin] + 2 S-adenosyl-L-methionine = 2-methyladenosine(2503) in 23S rRNA + 5'-deoxyadenosine + L-methionine + 2 oxidized [2Fe-2S]-[ferredoxin] + S-adenosyl-L-homocysteine. It catalyses the reaction adenosine(37) in tRNA + 2 reduced [2Fe-2S]-[ferredoxin] + 2 S-adenosyl-L-methionine = 2-methyladenosine(37) in tRNA + 5'-deoxyadenosine + L-methionine + 2 oxidized [2Fe-2S]-[ferredoxin] + S-adenosyl-L-homocysteine. Its function is as follows. Specifically methylates position 2 of adenine 2503 in 23S rRNA and position 2 of adenine 37 in tRNAs. The chain is Probable dual-specificity RNA methyltransferase RlmN from Clostridium novyi (strain NT).